The sequence spans 430 residues: Dihydroorotase (430 aa).

The Zn(2+) site is built by H61 and H63. Substrate is bound by residues 63 to 65 and N95; that span reads HLR. Residues D153, H180, and H233 each coordinate Zn(2+). Residue N279 participates in substrate binding. D306 lines the Zn(2+) pocket. D306 is an active-site residue. Position 310 (H310) interacts with substrate.

This sequence belongs to the metallo-dependent hydrolases superfamily. DHOase family. Class I DHOase subfamily. Requires Zn(2+) as cofactor.

The enzyme catalyses (S)-dihydroorotate + H2O = N-carbamoyl-L-aspartate + H(+). It participates in pyrimidine metabolism; UMP biosynthesis via de novo pathway; (S)-dihydroorotate from bicarbonate: step 3/3. Its function is as follows. Catalyzes the reversible cyclization of carbamoyl aspartate to dihydroorotate. The polypeptide is Dihydroorotase (Caldicellulosiruptor saccharolyticus (strain ATCC 43494 / DSM 8903 / Tp8T 6331)).